A 580-amino-acid chain; its full sequence is MRGGHKGGRCACPRVIRKVLAKCGCCFARGGRESYSIAGSEGSISASAASGLAAPSGPSSGLSSGPCSPGPPGPVSGLRRWLDHSKHCLSVETEADSGQAGPYENWMLEPALATGEELPELTLLTTLLEGPGDKTQPPEEETLSQAPESEEEQKKKALERSMYVLSELVETEKMYVDDLGQIVEGYMATMAAQGVPESLRGRDRIVFGNIQQIYEWHRDYFLQELQRCLKDPDWLAQLFIKHERRLHMYVVYCQNKPKSEHVVSEFGDSYFEELRQQLGHRLQLNDLLIKPVQRIMKYQLLLKDFLKYYNRAGMDTADLEQAVEVMCFVPKRCNDMMTLGRLRGFEGKLTAQGKLLGQDTFWVTEPEAGGLLSSRGRERRVFLFEQIIIFSEALGGGVRGGTQPGYVYKNSIKVSCLGLEGNLQGDPCRFALTSRGPEGGIQRYVLQAADPAISQAWIKHVAQILESQRDFLNALQSPIEYQRRESQTNSLGRPRGPGVGSPGRIQLGDQAQGSTHTPINGSLPSLLLSPKGEVARALLPLDKQALGDIPQAPHDSPPVSPTPKTPPCQARLAKLDEDEL.

A compositionally biased stretch (low complexity) spans 48 to 67 (AASGLAAPSGPSSGLSSGPC). Disordered stretches follow at residues 48 to 76 (AASGLAAPSGPSSGLSSGPCSPGPPGPVS) and 128 to 157 (LEGPGDKTQPPEEETLSQAPESEEEQKKKA). Positions 160–336 (RSMYVLSELV…CFVPKRCNDM (177 aa)) constitute a DH domain. Residues 278 to 299 (LGHRLQLNDLLIKPVQRIMKYQ) are important for binding to Rho GTPases. The 119-residue stretch at 348–466 (KLTAQGKLLG…WIKHVAQILE (119 aa)) folds into the PH domain. Positions 467–493 (SQRDFLNALQSPIEYQRRESQTNSLGR) are sufficient to bind activated GNAQ. 2 disordered regions span residues 482 to 524 (QRRE…GSLP) and 545 to 580 (ALGDIPQAPHDSPPVSPTPKTPPCQARLAKLDEDEL). A compositionally biased stretch (polar residues) spans 509–520 (DQAQGSTHTPIN). Residues 555-566 (DSPPVSPTPKTP) are compositionally biased toward pro residues.

Interacts (via the DH domain) with POPDC1 (via the C-terminus cytoplasmic tail). Interacts with activated GNAQ and GNA11. Interacts with RHOA, CDC42 and RAC1. In terms of tissue distribution, isoform 1 and isoform 2 are highly expressed in excitable tissues, such as brain, heart and muscle. Also detected in kidney and liver.

The protein resides in the cell membrane. Its subcellular location is the cytoplasm. It is found in the myofibril. It localises to the sarcomere. May play a role in actin cytoskeleton reorganization in different tissues since its activation induces formation of actin stress fibers. It works as a guanine nucleotide exchange factor for Rho family of small GTPases. Links specifically G alpha q/11-coupled receptors to RHOA activation. May be an important regulator of processes involved in axon and dendrite formation. In neurons seems to be an exchange factor primarily for RAC1. Involved in skeletal myogenesis. The chain is Rho guanine nucleotide exchange factor 25 (ARHGEF25) from Homo sapiens (Human).